The chain runs to 452 residues: Phosphoglucosamine mutase 2 (452 aa).

S101 functions as the Phosphoserine intermediate in the catalytic mechanism. S101, D245, D247, and D249 together coordinate Mg(2+). Position 101 is a phosphoserine (S101).

Belongs to the phosphohexose mutase family. Requires Mg(2+) as cofactor. In terms of processing, activated by phosphorylation.

It carries out the reaction alpha-D-glucosamine 1-phosphate = D-glucosamine 6-phosphate. Functionally, catalyzes the conversion of glucosamine-6-phosphate to glucosamine-1-phosphate. This chain is Phosphoglucosamine mutase 2, found in Shewanella amazonensis (strain ATCC BAA-1098 / SB2B).